Consider the following 408-residue polypeptide: LL-diaminopimelate aminotransferase (408 aa).

Positions 15 and 42 each coordinate substrate. Pyridoxal 5'-phosphate-binding positions include tyrosine 72, 108–109 (SK), tyrosine 132, asparagine 187, tyrosine 218, and 246–248 (SFS). Substrate-binding residues include lysine 109, tyrosine 132, and asparagine 187. Lysine 249 bears the N6-(pyridoxal phosphate)lysine mark. The pyridoxal 5'-phosphate site is built by arginine 257 and asparagine 292. Positions 292 and 388 each coordinate substrate.

The protein belongs to the class-I pyridoxal-phosphate-dependent aminotransferase family. LL-diaminopimelate aminotransferase subfamily. In terms of assembly, homodimer. It depends on pyridoxal 5'-phosphate as a cofactor.

It catalyses the reaction (2S,6S)-2,6-diaminopimelate + 2-oxoglutarate = (S)-2,3,4,5-tetrahydrodipicolinate + L-glutamate + H2O + H(+). Its pathway is amino-acid biosynthesis; L-lysine biosynthesis via DAP pathway; LL-2,6-diaminopimelate from (S)-tetrahydrodipicolinate (aminotransferase route): step 1/1. Functionally, involved in the synthesis of meso-diaminopimelate (m-DAP or DL-DAP), required for both lysine and peptidoglycan biosynthesis. Catalyzes the direct conversion of tetrahydrodipicolinate to LL-diaminopimelate. This chain is LL-diaminopimelate aminotransferase, found in Leptospira borgpetersenii serovar Hardjo-bovis (strain JB197).